A 470-amino-acid chain; its full sequence is Coproporphyrinogen III oxidase (470 aa).

FAD contacts are provided by residues 12 to 17, 41 to 42, Lys-49, 63 to 66, Val-256, Trp-409, and 448 to 450; these read GGGITG, EA, GPDS, and VGI.

The protein belongs to the protoporphyrinogen/coproporphyrinogen oxidase family. Coproporphyrinogen III oxidase subfamily. In terms of assembly, monomer. Requires FAD as cofactor.

Its subcellular location is the cytoplasm. The protein resides in the cell membrane. It catalyses the reaction coproporphyrinogen III + 3 O2 = coproporphyrin III + 3 H2O2. Its pathway is porphyrin-containing compound metabolism; protoheme biosynthesis. With respect to regulation, only weakly inhibited by acifluorfen, in contrast to eukaryotic family members. Weakly inhibited by methylacifluorfen. Bilirubin, biliverdin and hemin are all competitive inhibitors. Its function is as follows. Involved in coproporphyrin-dependent heme b biosynthesis. Catalyzes the oxidation of coproporphyrinogen III to coproporphyrin III. Can also oxidize protoporphyrinogen IX to protoporphyrin-IX. The specific activity for the oxidation of coproporphyrinogen III is much higher than that for the oxidation of protoporphyrinogen IX. Can also oxidize mesoporphyrinogen IX, but not uroporphyrinogen III. In Bacillus subtilis (strain 168), this protein is Coproporphyrinogen III oxidase.